We begin with the raw amino-acid sequence, 372 residues long: Cytochrome b (372 aa).

The next 4 helical transmembrane spans lie at 25 to 45, 69 to 90, 105 to 125, and 170 to 190; these read FGSMLLTCSALQIMTGFFLSM, WMMQNLHAIGASMFFICVYIHV, WLSGTTLLIMLMATAFFGYVL, and FFALHFILPFGIISLSSLHIM. Heme b contacts are provided by His-75 and His-89. Heme b contacts are provided by His-174 and His-188. An a ubiquinone-binding site is contributed by His-193. Helical transmembrane passes span 218 to 238, 280 to 300, 312 to 332, and 339 to 358; these read YKDLFMISSMIMIMLLTISFI, LGGALALAMSITILLTVPFTH, FMQLMFWTLVTTFMIITWTAT, and YTMISQVTSSLYFMFFMSNP.

This sequence belongs to the cytochrome b family. The cytochrome bc1 complex contains 3 respiratory subunits (MT-CYB, CYC1 and UQCRFS1), 2 core proteins (UQCRC1 and UQCRC2) and probably 6 low-molecular weight proteins. The cofactor is heme b.

It is found in the mitochondrion inner membrane. Component of the ubiquinol-cytochrome c reductase complex (complex III or cytochrome b-c1 complex) that is part of the mitochondrial respiratory chain. The b-c1 complex mediates electron transfer from ubiquinol to cytochrome c. Contributes to the generation of a proton gradient across the mitochondrial membrane that is then used for ATP synthesis. In Acrantophis dumerili (Dumeril's ground boa), this protein is Cytochrome b (MT-CYB).